The sequence spans 280 residues: Small ribosomal subunit protein uS15m (280 aa).

Belongs to the universal ribosomal protein uS15 family. In terms of assembly, component of the mitochondrial ribosome small subunit (28S) which comprises a 12S rRNA and about 30 distinct proteins. As to expression, expressed in anterior and posterior midgut primordia in stage 11 embryos. In stage 13 embryos, expression is high in the developing midgut and hindgut. In stage 16 embryos, expression is elevated in the midgut, hindgut, and in a small region that will give rise to pharyngeal muscles and to the stomatogastric nervous system. In larvae, expression is predominant in the gut, and head, presumably in pharyngeal muscles.

The protein resides in the mitochondrion. Its function is as follows. Essential for gut mitochondrial activity. Might be involved in tissue specific growth factor production. This Drosophila melanogaster (Fruit fly) protein is Small ribosomal subunit protein uS15m (bonsai).